The primary structure comprises 231 residues: Orotidine 5'-phosphate decarboxylase (231 aa).

Substrate is bound by residues D11, K33, 60-69 (DLKFHDIPNT), T120, R181, Q190, G210, and R211. Residue K62 is the Proton donor of the active site.

It belongs to the OMP decarboxylase family. Type 1 subfamily. Homodimer.

It catalyses the reaction orotidine 5'-phosphate + H(+) = UMP + CO2. Its pathway is pyrimidine metabolism; UMP biosynthesis via de novo pathway; UMP from orotate: step 2/2. Functionally, catalyzes the decarboxylation of orotidine 5'-monophosphate (OMP) to uridine 5'-monophosphate (UMP). The protein is Orotidine 5'-phosphate decarboxylase of Pseudoalteromonas atlantica (strain T6c / ATCC BAA-1087).